The following is a 277-amino-acid chain: Protein RKD3 (277 aa).

In terms of domain architecture, RWP-RK spans 142 to 226; that stretch reads KRIIMKRRYR…LGNTKGRTPK (85 aa). Positions 201–246 form a coiled coil; it reads RKLTSLNALIANLKDLLGNTKGRTPKSKLRNALELLEMEKKMIEEV.

The protein resides in the nucleus. Putative transcription factor. The protein is Protein RKD3 (RKD3) of Arabidopsis thaliana (Mouse-ear cress).